Consider the following 495-residue polypeptide: Cysteine-rich secretory protein LCCL domain-containing 2 (495 aa).

A signal peptide spans 1-22; sequence MSCLLNNMVLMGLALLVCGVQA. N27 carries N-linked (GlcNAc...) asparagine glycosylation. Residues 60-200 form the SCP domain; it reads LMLHNKLRGQ…ENAVYLVCNY (141 aa). 2 LCCL domains span residues 282–377 and 383–486; these read MTQV…SSSF and TETA…QNGN. 4 cysteine pairs are disulfide-bonded: C288/C306, C310/C330, C389/C411, and C415/C438.

As to quaternary structure, binds to heparin, dermatan sulfate and chondroitin sulfate. Present in kidney renal tubules (at protein level).

Its subcellular location is the secreted. Its function is as follows. Promotes matrix assembly. This chain is Cysteine-rich secretory protein LCCL domain-containing 2 (Crispld2), found in Mus musculus (Mouse).